Here is a 56-residue protein sequence, read N- to C-terminus: MAKADYNKRKPRKFGKGARRCMRCGQYGPIIRIHGLMLCRHCFREVAPKLGFKKYE.

Positions 21, 24, 39, and 42 each coordinate Zn(2+).

This sequence belongs to the universal ribosomal protein uS14 family. Zinc-binding uS14 subfamily. In terms of assembly, part of the 30S ribosomal subunit. Zn(2+) serves as cofactor.

Functionally, binds 16S rRNA, required for the assembly of 30S particles. The polypeptide is Small ribosomal subunit protein uS14 (Thermococcus kodakarensis (strain ATCC BAA-918 / JCM 12380 / KOD1) (Pyrococcus kodakaraensis (strain KOD1))).